The chain runs to 522 residues: Cytochrome P450 9c1 (522 aa).

C464 lines the heme pocket.

Belongs to the cytochrome P450 family. Requires heme as cofactor.

It localises to the endoplasmic reticulum membrane. Its subcellular location is the microsome membrane. May be involved in the metabolism of insect hormones and in the breakdown of synthetic insecticides. This Drosophila melanogaster (Fruit fly) protein is Cytochrome P450 9c1 (Cyp9c1).